Reading from the N-terminus, the 406-residue chain is Multifunctional CCA protein (406 aa).

Positions 8 and 11 each coordinate ATP. Residues G8 and R11 each contribute to the CTP site. Residues D21 and D23 each contribute to the Mg(2+) site. ATP-binding residues include R91, R138, and R141. The CTP site is built by R91, R138, and R141. Positions 229–331 constitute an HD domain; that stretch reads TGIHQEMVSD…LELLGRCDAL (103 aa).

Belongs to the tRNA nucleotidyltransferase/poly(A) polymerase family. Bacterial CCA-adding enzyme type 1 subfamily. Monomer. Can also form homodimers and oligomers. It depends on Mg(2+) as a cofactor. The cofactor is Ni(2+).

The enzyme catalyses a tRNA precursor + 2 CTP + ATP = a tRNA with a 3' CCA end + 3 diphosphate. It carries out the reaction a tRNA with a 3' CCA end + 2 CTP + ATP = a tRNA with a 3' CCACCA end + 3 diphosphate. Its function is as follows. Catalyzes the addition and repair of the essential 3'-terminal CCA sequence in tRNAs without using a nucleic acid template. Adds these three nucleotides in the order of C, C, and A to the tRNA nucleotide-73, using CTP and ATP as substrates and producing inorganic pyrophosphate. tRNA 3'-terminal CCA addition is required both for tRNA processing and repair. Also involved in tRNA surveillance by mediating tandem CCA addition to generate a CCACCA at the 3' terminus of unstable tRNAs. While stable tRNAs receive only 3'-terminal CCA, unstable tRNAs are marked with CCACCA and rapidly degraded. The polypeptide is Multifunctional CCA protein (Stenotrophomonas maltophilia (strain R551-3)).